Here is a 484-residue protein sequence, read N- to C-terminus: Phosphomethylpyrimidine synthase (484 aa).

Substrate contacts are provided by residues Asn97, Met126, Tyr156, His192, 212 to 214 (SRG), 253 to 256 (DSLR), and Glu292. His296 is a Zn(2+) binding site. Residue Tyr319 participates in substrate binding. Residue His360 coordinates Zn(2+). [4Fe-4S] cluster contacts are provided by Cys440, Cys443, and Cys448.

This sequence belongs to the ThiC family. Requires [4Fe-4S] cluster as cofactor.

The enzyme catalyses 5-amino-1-(5-phospho-beta-D-ribosyl)imidazole + S-adenosyl-L-methionine = 4-amino-2-methyl-5-(phosphooxymethyl)pyrimidine + CO + 5'-deoxyadenosine + formate + L-methionine + 3 H(+). The protein operates within cofactor biosynthesis; thiamine diphosphate biosynthesis. Functionally, catalyzes the synthesis of the hydroxymethylpyrimidine phosphate (HMP-P) moiety of thiamine from aminoimidazole ribotide (AIR) in a radical S-adenosyl-L-methionine (SAM)-dependent reaction. This chain is Phosphomethylpyrimidine synthase, found in Synechococcus sp. (strain CC9605).